The sequence spans 3763 residues: Colossin-B (3763 aa).

The N-terminal stretch at 1-19 (MKGSIFLLFIFQIFKFSSS) is a signal peptide. Residues asparagine 43, asparagine 110, asparagine 258, and asparagine 284 are each glycosylated (N-linked (GlcNAc...) asparagine). Residues 619 to 643 (DCSTLQCPSGYECKLDKNSKTRGCI) enclose the Follistatin-like 1 domain. Asparagine 652 and asparagine 672 each carry an N-linked (GlcNAc...) asparagine glycan. 2 consecutive Follistatin-like domains span residues 701–724 (HCRN…PRCF) and 729–752 (PCEF…AKCF). Residues 792-832 (PPIFYETPSPTSAPPTETPSPTDTPTDKPTIPPTPTPTPSK) are disordered. The segment covering 810-820 (PSPTDTPTDKP) has biased composition (low complexity). N-linked (GlcNAc...) asparagine glycosylation is found at asparagine 845 and asparagine 991. 2 disordered regions span residues 1033 to 1068 (LGSS…SESS) and 1095 to 1124 (PQPT…PTST). A compositionally biased stretch (gly residues) spans 1036-1051 (SGSGSSGNSGSSGSGG). 2 stretches are compositionally biased toward low complexity: residues 1052–1068 (SSND…SESS) and 1099–1124 (PSTD…PTST). The N-linked (GlcNAc...) asparagine glycan is linked to asparagine 1054. Positions 1159–1227 (VSGVEITLIQ…LLNKYPIDTS (69 aa)) constitute a CNA-B 1 domain. N-linked (GlcNAc...) asparagine glycosylation is found at asparagine 1229 and asparagine 1247. A CNA-B 2 domain is found at 1304-1373 (IKGIQVTLKD…VYTMDTFQLS (70 aa)). Residue asparagine 1381 is glycosylated (N-linked (GlcNAc...) asparagine). CNA-B domains follow at residues 1437–1515 (LPGV…IDTK), 1582–1648 (VPGI…LTLD), and 1731–1809 (VGGV…FTLS). N-linked (GlcNAc...) asparagine glycosylation is found at asparagine 1769 and asparagine 1815. The segment at 1883–1955 (GSTVDGGTSV…SEQPPEDSME (73 aa)) is disordered. The span at 1898–1948 (STSTTTVSSSPSSSSDIGSSSDISSEVSSSLSSSPSSSEQPSEQSSSSSEQ) shows a compositional bias: low complexity. In terms of domain architecture, CNA-B 6 spans 2015-2083 (VPDVTVTLVN…DPLSGKIDFN (69 aa)). Residues asparagine 2128, asparagine 2145, asparagine 2243, asparagine 2294, asparagine 2351, asparagine 2378, asparagine 2453, asparagine 2493, asparagine 2496, asparagine 2516, asparagine 2572, asparagine 2601, asparagine 2624, asparagine 2668, asparagine 2698, asparagine 2714, asparagine 2781, asparagine 2787, asparagine 2800, asparagine 2838, and asparagine 2858 are each glycosylated (N-linked (GlcNAc...) asparagine). The CNA-B 7 domain maps to 2143–2197 (FPNITVRLFDQNLQPVLDNFNIQVEPTVTNALGQYYFDNLHSGSYIVKFEVPTRY). The region spanning 2292–2345 (VPNVTVEIFNPTGQQVYNINELLIGSTTTDSNGYYLFDEIQPGSYIIKFSNIPN) is the CNA-B 8 domain. Residues 2453 to 2477 (NTTTTDQNGLYYFDNLSPGLYKLLF) form the CNA-B 9 domain. A CNA-B 10 domain is found at 2713–2766 (VNGTIVTLLDINGNTMVDADSYPINSYTTGPDGYYKFDDFSFGKYIITFSGVPD). The 78-residue stretch at 2984–3061 (LGGVVVTLYN…DSNASPVDGY (78 aa)) folds into the CNA-B 11 domain. Asparagine 3083, asparagine 3130, asparagine 3372, asparagine 3390, asparagine 3459, asparagine 3466, asparagine 3557, asparagine 3666, asparagine 3676, and asparagine 3681 each carry an N-linked (GlcNAc...) asparagine glycan. The region spanning 3128-3201 (YPNITVSIYT…TKTGVNLGII (74 aa)) is the CNA-B 12 domain. Residues 3664-3733 (MANITVQLFS…NDKRDLEKIN (70 aa)) form the CNA-B 13 domain.

This sequence belongs to the serine-aspartate repeat-containing protein (SDr) family.

Its subcellular location is the secreted. The polypeptide is Colossin-B (colB) (Dictyostelium discoideum (Social amoeba)).